A 366-amino-acid chain; its full sequence is Chorismate synthase (366 aa).

Residue arginine 48 participates in NADP(+) binding. FMN-binding positions include 125–127, 241–242, glycine 285, 300–304, and arginine 326; these read RSS, NA, and KPTSS.

Belongs to the chorismate synthase family. As to quaternary structure, homotetramer. The cofactor is FMNH2.

It carries out the reaction 5-O-(1-carboxyvinyl)-3-phosphoshikimate = chorismate + phosphate. The protein operates within metabolic intermediate biosynthesis; chorismate biosynthesis; chorismate from D-erythrose 4-phosphate and phosphoenolpyruvate: step 7/7. In terms of biological role, catalyzes the anti-1,4-elimination of the C-3 phosphate and the C-6 proR hydrogen from 5-enolpyruvylshikimate-3-phosphate (EPSP) to yield chorismate, which is the branch point compound that serves as the starting substrate for the three terminal pathways of aromatic amino acid biosynthesis. This reaction introduces a second double bond into the aromatic ring system. This chain is Chorismate synthase, found in Ruegeria pomeroyi (strain ATCC 700808 / DSM 15171 / DSS-3) (Silicibacter pomeroyi).